The chain runs to 121 residues: Small ribosomal subunit protein uS13 (121 aa).

The segment at 91 to 121 (HRRGLPVRGQNSKNNARTRKGPRRTVANKKK) is disordered. A compositionally biased stretch (basic residues) spans 106 to 121 (ARTRKGPRRTVANKKK).

It belongs to the universal ribosomal protein uS13 family. In terms of assembly, part of the 30S ribosomal subunit. Forms a loose heterodimer with protein S19. Forms two bridges to the 50S subunit in the 70S ribosome.

Located at the top of the head of the 30S subunit, it contacts several helices of the 16S rRNA. In the 70S ribosome it contacts the 23S rRNA (bridge B1a) and protein L5 of the 50S subunit (bridge B1b), connecting the 2 subunits; these bridges are implicated in subunit movement. Contacts the tRNAs in the A and P-sites. This is Small ribosomal subunit protein uS13 from Bacillus mycoides (strain KBAB4) (Bacillus weihenstephanensis).